The primary structure comprises 623 residues: Kelch-like protein diablo (623 aa).

The disordered stretch occupies residues 1–54; the sequence is MGDLPGSGSTAQPRDAAVTGTGGNSTAGGGSSVGSTAVDRPPSPARLSHTSEKH. The residue at position 19 (Thr-19) is a Phosphothreonine. The span at 20 to 32 shows a compositional bias: gly residues; that stretch reads GTGGNSTAGGGSS. The BTB domain occupies 72–139; it reads CDVVLNVGGR…CYTAHIIVEE (68 aa). The BACK domain maps to 174–276; that stretch reads CLGIRAFADT…SPKFLVGTVG (103 aa). Kelch repeat units lie at residues 323 to 369, 371 to 417, 418 to 464, 466 to 511, 513 to 558, and 559 to 605; these read VLFA…VLND, LYAV…VLDE, FLYA…VLGG, LYAI…VFNN, IYAV…VVNG, and QLYA…VMRA.

The protein operates within protein modification; protein ubiquitination. Its function is as follows. Probable substrate-specific adapter of an E3 ubiquitin-protein ligase complex which mediates the ubiquitination and subsequent proteasomal degradation of target proteins. May have a role in synapse differentiation and growth. The polypeptide is Kelch-like protein diablo (Drosophila simulans (Fruit fly)).